Here is a 662-residue protein sequence, read N- to C-terminus: p-hydroxybenzoic acid efflux pump subunit AaeB (662 aa).

The next 11 helical transmembrane spans lie at 22 to 42, 52 to 72, 76 to 96, 102 to 122, 129 to 149, 161 to 181, 378 to 398, 415 to 435, 439 to 459, 465 to 485, and 491 to 511; these read FAFK…HLQL, AAIV…SGAI, GMLR…IIIA, VVML…SSLV, IFGL…GTPL, EIVL…PRSI, LFWL…IAVV, FLFG…FIMP, QSML…GLEV, GSLG…PMTF, and LDSA…IMLI.

This sequence belongs to the aromatic acid exporter ArAE (TC 2.A.85) family.

Its subcellular location is the cell inner membrane. In terms of biological role, forms an efflux pump with AaeA. Could function as a metabolic relief valve, allowing to eliminate certain compounds when they accumulate to high levels in the cell. The chain is p-hydroxybenzoic acid efflux pump subunit AaeB from Pectobacterium atrosepticum (strain SCRI 1043 / ATCC BAA-672) (Erwinia carotovora subsp. atroseptica).